A 161-amino-acid polypeptide reads, in one-letter code: Putative allophycocyanin subunit alpha 2 (161 aa).

Residue N71 is modified to N4-methylasparagine. C81 is a (2R,3E)-phycocyanobilin binding site.

The protein belongs to the phycobiliprotein family. Heterohexamer of two alpha chains, one alpha-B chain and three beta chains. Contains one covalently linked phycocyanobilin chromophore. The chromophore is added by phycocyanobilin lyase CpcS 1.

The protein resides in the cellular thylakoid membrane. Light-harvesting photosynthetic bile pigment-protein from the phycobiliprotein complex. Allophycocyanin has a maximum absorption at approximately 650 to 653 nanometers. The sequence is that of Putative allophycocyanin subunit alpha 2 (apcA2) from Nostoc sp. (strain PCC 7120 / SAG 25.82 / UTEX 2576).